The sequence spans 401 residues: Heparan-sulfate 6-O-sulfotransferase 1 (401 aa).

Residues Met1 to Arg4 are Cytoplasmic-facing. The chain crosses the membrane as a helical; Signal-anchor for type II membrane protein span at residues Ala5–Gly27. The Lumenal segment spans residues Pro28–Trp401. His83–Thr91 lines the 3'-phosphoadenylyl sulfate pocket. Residues Lys113–Lys114, Arg130, Trp135, and His140 contribute to the substrate site. The active-site Proton acceptor is His140. Positions 175 and 183 each coordinate 3'-phosphoadenylyl sulfate. Substrate-binding residues include His187 and Trp194. Asn254 carries an N-linked (GlcNAc...) asparagine glycan. Met307–Tyr309 provides a ligand contact to 3'-phosphoadenylyl sulfate. N-linked (GlcNAc...) asparagine glycosylation occurs at Asn310. Arg313–Ala314 is a 3'-phosphoadenylyl sulfate binding site. The disordered stretch occupies residues Glu367 to Pro389.

It belongs to the sulfotransferase 6 family. N-glycosylated.

Its subcellular location is the membrane. The catalysed reaction is alpha-D-glucosaminyl-[heparan sulfate](n) + 3'-phosphoadenylyl sulfate = 6-sulfo-alpha-D-glucosaminyl-[heparan sulfate](n) + adenosine 3',5'-bisphosphate + H(+). Inhibited by dithiothreitol and stimulated by protamine. 6-O-sulfation enzyme which catalyzes the transfer of sulfate from 3'-phosphoadenosine 5'-phosphosulfate (PAPS) to position 6 of the N-sulfoglucosamine residue (GlcNS) of heparan sulfate. Also transfers sulfate to CDSNS-heparin and performs the crucial step modification in the biosynthesis of anticoagulant heparan sulfate (HSact). Critical for normal neuronal development where it may play a role in neuron branching. May also play a role in limb development. May prefer iduronic acid. This is Heparan-sulfate 6-O-sulfotransferase 1 from Cricetulus griseus (Chinese hamster).